Consider the following 201-residue polypeptide: Probable nicotinate-nucleotide adenylyltransferase (201 aa).

It belongs to the NadD family.

The enzyme catalyses nicotinate beta-D-ribonucleotide + ATP + H(+) = deamido-NAD(+) + diphosphate. The protein operates within cofactor biosynthesis; NAD(+) biosynthesis; deamido-NAD(+) from nicotinate D-ribonucleotide: step 1/1. Its function is as follows. Catalyzes the reversible adenylation of nicotinate mononucleotide (NaMN) to nicotinic acid adenine dinucleotide (NaAD). This is Probable nicotinate-nucleotide adenylyltransferase from Neisseria gonorrhoeae (strain ATCC 700825 / FA 1090).